Here is a 338-residue protein sequence, read N- to C-terminus: Ketol-acid reductoisomerase (NADP(+)) (338 aa).

The KARI N-terminal Rossmann domain occupies 1–181; sequence MQIFYDKDCD…GGGRTGIIET (181 aa). Residues 24–27, R47, S50, S52, and 82–85 contribute to the NADP(+) site; these read YGSQ and DEFQ. Residue H107 is part of the active site. G133 contributes to the NADP(+) binding site. Residues 182–327 enclose the KARI C-terminal knotted domain; it reads SFREETETDL…AKLRAMMPWI (146 aa). Mg(2+)-binding residues include D190, E194, E226, and E230. Position 251 (S251) interacts with substrate.

It belongs to the ketol-acid reductoisomerase family. Requires Mg(2+) as cofactor.

The enzyme catalyses (2R)-2,3-dihydroxy-3-methylbutanoate + NADP(+) = (2S)-2-acetolactate + NADPH + H(+). It catalyses the reaction (2R,3R)-2,3-dihydroxy-3-methylpentanoate + NADP(+) = (S)-2-ethyl-2-hydroxy-3-oxobutanoate + NADPH + H(+). The protein operates within amino-acid biosynthesis; L-isoleucine biosynthesis; L-isoleucine from 2-oxobutanoate: step 2/4. Its pathway is amino-acid biosynthesis; L-valine biosynthesis; L-valine from pyruvate: step 2/4. Involved in the biosynthesis of branched-chain amino acids (BCAA). Catalyzes an alkyl-migration followed by a ketol-acid reduction of (S)-2-acetolactate (S2AL) to yield (R)-2,3-dihydroxy-isovalerate. In the isomerase reaction, S2AL is rearranged via a Mg-dependent methyl migration to produce 3-hydroxy-3-methyl-2-ketobutyrate (HMKB). In the reductase reaction, this 2-ketoacid undergoes a metal-dependent reduction by NADPH to yield (R)-2,3-dihydroxy-isovalerate. The sequence is that of Ketol-acid reductoisomerase (NADP(+)) from Acinetobacter baumannii (strain AB0057).